The primary structure comprises 441 residues: Cytochrome c biogenesis protein Ccs1 (441 aa).

The next 3 helical transmembrane spans lie at 19–39 (LKLA…GTVI), 78–98 (TWWF…CTLA), and 164–184 (IGPI…LLGN).

The protein belongs to the Ccs1/CcsB family. In terms of assembly, may interact with CcsA.

It is found in the plastid. The protein resides in the chloroplast thylakoid membrane. Its function is as follows. Required during biogenesis of c-type cytochromes (cytochrome c6 and cytochrome f) at the step of heme attachment. In Rhodomonas salina (Cryptomonas salina), this protein is Cytochrome c biogenesis protein Ccs1.